Consider the following 227-residue polypeptide: Lysosomal-associated transmembrane protein 4B (227 aa).

The next 4 helical transmembrane spans lie at 26–46, 72–92, 100–120, and 153–173; these read ILLG…LLSA, MCIA…ATYG, WIIP…LVAI, and CLVL…GYLI. A required for NEDD4 interaction region spans residues 205 to 222; the sequence is PPYDDATAVPSTAKEPPP.

Belongs to the LAPTM4/LAPTM5 transporter family. In terms of assembly, homooligomer; upon reaching the lysosomes. Interacts with MCOLN1. Interacts with NEDD4; may play a role in the lysosomal sorting of LAPTM4B; enhances HGS association with NEDD4; mediates inhibition of EGFR degradation. Interacts with PIP5K1C; promotes SNX5 association with LAPTM4B; kinase activity of PIP5K1C is required; interaction is regulated by phosphatidylinositol 4,5-bisphosphate generated by PIP5K1C. Interacts with HGS; promotes HGS ubiquitination. Interacts with SNX5. Interacts with SLC3A2 and SLC7A5; recruits SLC3A2 and SLC7A5 to lysosomes to promote leucine uptake into these organelles and is required for mTORC1 activation. Interacts with LRRC32; decreases TGFB1 production in regulatory T cells. Interacts with BECN1; competes with EGFR for LAPTM4B binding; regulates EGFR activity. Interacts with EGFR; positively correlates with EGFR activation. Post-translationally, undergoes proteolytic cleavage following delivery to the lysosomes. In terms of processing, ubiquitinated by NEDD4.

The protein resides in the endomembrane system. Its subcellular location is the late endosome membrane. It localises to the cell membrane. It is found in the cell projection. The protein localises to the lysosome membrane. The protein resides in the endosome membrane. Its subcellular location is the endosome. It localises to the multivesicular body membrane. It is found in the multivesicular body lumen. Required for optimal lysosomal function. Blocks EGF-stimulated EGFR intraluminal sorting and degradation. Conversely by binding with the phosphatidylinositol 4,5-bisphosphate, regulates its PIP5K1C interaction, inhibits HGS ubiquitination and relieves LAPTM4B inhibition of EGFR degradation. Recruits SLC3A2 and SLC7A5 (the Leu transporter) to the lysosome, promoting entry of leucine and other essential amino acid (EAA) into the lysosome, stimulating activation of proton-transporting vacuolar (V)-ATPase protein pump (V-ATPase) and hence mTORC1 activation. Plays a role as negative regulator of TGFB1 production in regulatory T cells. Binds ceramide and facilitates its exit from late endosome in order to control cell death pathways. The sequence is that of Lysosomal-associated transmembrane protein 4B from Mus musculus (Mouse).